A 282-amino-acid chain; its full sequence is MKPKVQNLIFDLDGTLLSWGHEPLPQTVTFLKELQKQGFKITFATGRSHILIRNTTQFIQPDLPVISSNGALIYDFAREKALHMTQLAPQSVVPIMRLLLQLEESFCIYTDKKVFGFEKPGIPCKRLRTTQSKIVEPDITQNNFTINPLTDASKFDFATQNITKILLITEDRGRISKITKHLDAIENISYVSSMTFALDIMHKDVNKAYGLKALEQQTGLDPQMTMVFGDGDNDVEIFNAVKYSVAMANGSDLAKQNATFISEFDNDHDGIYHFLQCFLKIE.

The active-site Nucleophile is Asp-11. Mg(2+) is bound at residue Asp-11. Position 12 (Leu-12) interacts with phosphate. Asp-13 contacts Mg(2+). Phosphate-binding positions include 45 to 46 (TG) and Lys-207. Asp-230 provides a ligand contact to Mg(2+). Asn-233 is a phosphate binding site.

The protein belongs to the HAD-like hydrolase superfamily. Cof family. The cofactor is Mg(2+).

In Mycoplasma pneumoniae (strain ATCC 29342 / M129 / Subtype 1) (Mycoplasmoides pneumoniae), this protein is Putative phosphatase MPN_383.